Consider the following 89-residue polypeptide: Conotoxin Lt6.4 (89 aa).

A signal peptide spans 1 to 22; the sequence is MKLTCVPIVAMLFLMACQLITA. A propeptide spanning residues 23–50 is cleaved from the precursor; that stretch reads DYSREKHGYSAEKSSDKIQDSFYSKLTK. 3 disulfides stabilise this stretch: C52–C67, C59–C71, and C66–C80.

This sequence belongs to the conotoxin O1 superfamily. In terms of tissue distribution, expressed by the venom duct.

It is found in the secreted. This Conus litteratus (Lettered cone) protein is Conotoxin Lt6.4.